The following is a 215-amino-acid chain: Wtf element wtf7 (215 aa).

The disordered stretch occupies residues 1–21; that stretch reads MSGSYAPIEDSADELSVHSGN. Helical transmembrane passes span 119–139, 149–169, and 189–209; these read LAQS…CLFF, LMGW…SFIL, and LILF…YALY.

It belongs to the WTF family.

It is found in the spore membrane. May act in meiotic drive. The chain is Wtf element wtf7 from Schizosaccharomyces pombe (strain 972 / ATCC 24843) (Fission yeast).